A 475-amino-acid polypeptide reads, in one-letter code: Na(+)/H(+) antiporter NhaA 2 (475 aa).

12 helical membrane-spanning segments follow: residues 44–64 (AQATASVFLLVATITALWWAN), 92–112 (LKHIINDGLMVIFFFFIGLEI), 130–150 (LILCALGGMICPAVIYSLFNW), 156–176 (IGWGIPMATDTAFALGALTLV), 186–206 (AFLVGLAIVDDVGAIVVIALF), 211–231 (ISVIFLSISFSLIAFLAIANY), 232–252 (AGVLRPIFYILIGIAAWWTML), 255–275 (GVHPTFAGVAIALTVPARPML), 331–351 (ALDLPVSLFVLPLFALVNAGV), 368–388 (LGIVIGLVIGKFVGISGACWL), 406–426 (VIGMSLIAGIGFTMSTFIATL), and 442–462 (ILFASLLSAILGLLYLRIIAA).

This sequence belongs to the NhaA Na(+)/H(+) (TC 2.A.33) antiporter family.

Its subcellular location is the cell inner membrane. It catalyses the reaction Na(+)(in) + 2 H(+)(out) = Na(+)(out) + 2 H(+)(in). In terms of biological role, na(+)/H(+) antiporter that extrudes sodium in exchange for external protons. This Psychromonas ingrahamii (strain DSM 17664 / CCUG 51855 / 37) protein is Na(+)/H(+) antiporter NhaA 2.